We begin with the raw amino-acid sequence, 353 residues long: uncharacterized protein (353 aa).

The tract at residues 69–106 (ISSATPSSTPPATRASSRLQPPKGHQAGGSNSQQQQPS) is disordered. Residues 70-86 (SSATPSSTPPATRASSR) show a composition bias toward low complexity. Residues 319–353 (GENKEKKMREMSRVYREMTRQMDDTRRDLDRLNQG) are a coiled coil.

This is an uncharacterized protein from Gibberella zeae (strain ATCC MYA-4620 / CBS 123657 / FGSC 9075 / NRRL 31084 / PH-1) (Wheat head blight fungus).